Here is a 382-residue protein sequence, read N- to C-terminus: D-galactonate dehydratase (382 aa).

A Mg(2+)-binding site is contributed by Asp-183. Residue His-185 is the Proton donor of the active site. Mg(2+)-binding residues include Glu-209 and Glu-235. The Proton acceptor role is filled by His-285.

It belongs to the mandelate racemase/muconate lactonizing enzyme family. GalD subfamily. Mg(2+) is required as a cofactor.

The catalysed reaction is D-galactonate = 2-dehydro-3-deoxy-D-galactonate + H2O. It functions in the pathway carbohydrate acid metabolism; D-galactonate degradation; D-glyceraldehyde 3-phosphate and pyruvate from D-galactonate: step 1/3. Catalyzes the dehydration of D-galactonate to 2-keto-3-deoxy-D-galactonate. In Ralstonia pickettii (strain 12J), this protein is D-galactonate dehydratase.